Consider the following 386-residue polypeptide: Putative matrix metalloproteinase (386 aa).

The N-terminal stretch at 1–34 (MPTAHFQHSIRYLNVTNMLIFSIISFLLIYQTNS) is a signal peptide. Asn14 and Asn58 each carry an N-linked (GlcNAc...) asparagine; by host glycan. His186 provides a ligand contact to Zn(2+). Glu187 is a catalytic residue. Residues His190 and His196 each coordinate Zn(2+). Residues 235–258 (NEQSTHQSTRHRPHRRPSPDGSCR) are disordered.

Belongs to the peptidase M10A family. Zn(2+) serves as cofactor.

The protein is Putative matrix metalloproteinase of Spodoptera frugiperda (Fall armyworm).